A 392-amino-acid polypeptide reads, in one-letter code: Heavy metal-associated isoprenylated plant protein 6 (392 aa).

Residues 1–19 (MGEKKEETATKPQGEKKPT) show a composition bias toward basic and acidic residues. The interval 1–22 (MGEKKEETATKPQGEKKPTDGG) is disordered. In terms of domain architecture, HMA 1 spans 23–86 (ITTVVMKLDM…KVADKIKRPV (64 aa)). Positions 34 and 37 each coordinate Cd(2+). The interval 89–157 (VSTVAPPKKE…PPPPKESTVV (69 aa)) is disordered. Basic and acidic residues predominate over residues 106 to 145 (AEKKPSPAAEEKPAEKKPAAVEKPGEKKEEKKKEEGEKKA). Residues 153-216 (ESTVVLKTKL…YLNEKLKRTV (64 aa)) enclose the HMA 2 domain. Cd(2+) is bound by residues cysteine 164 and cysteine 167. A compositionally biased stretch (basic and acidic residues) spans 258 to 270 (KKVDGGGEKKKEV). 2 disordered regions span residues 258–285 (KKVD…GGDG) and 350–392 (GQGY…CSVM). The span at 272–285 (VGGGGGGGGGGGDG) shows a compositional bias: gly residues. Cysteine 389 carries the cysteine methyl ester modification. The S-farnesyl cysteine moiety is linked to residue cysteine 389. Residues 390–392 (SVM) constitute a propeptide, removed in mature form.

The protein belongs to the HIPP family. In terms of tissue distribution, expressed in petioles, hypocotyls, peduncles, vascular bundles and root meristems.

It localises to the cell membrane. Functionally, heavy-metal-binding protein. Involved in the maintenance of heavy metal homeostasis and/or in detoxification. In Arabidopsis thaliana (Mouse-ear cress), this protein is Heavy metal-associated isoprenylated plant protein 6.